Reading from the N-terminus, the 132-residue chain is Sodium/calcium exchanger regulatory protein 1 (132 aa).

(9Z)-hexadecenoate-binding residues include Arg126 and Tyr128.

The protein belongs to the calycin superfamily. Fatty-acid binding protein (FABP) family. As to quaternary structure, interacts with Na(+)/Ca(2+) exchanger NCXSQ1; ReP1-NCXSQ phosphorylation does not affect the interaction. Phosphorylated. Phosphorylation may result in the release of the bound fatty acid. Expressed in the optic nerve (at protein level).

It localises to the cytoplasm. The protein resides in the membrane. Functionally, binds and may transport fatty acids such as palmitoleate. Also binds poly-phosphoinositides including phosphatidylinositol 4-phosphate (PtdIns(4)P), phosphatidylinositol 4,5-bisphosphate (PtdIns(4,5)P2) and phosphatidylinositol 3,4,5-trisphosphate (PtdIns(3,4,5)P3), and phosphatidic acid. When phosphorylated, stimulates the activity of optic nerve Na(+)/Ca(2+) exchanger. This chain is Sodium/calcium exchanger regulatory protein 1, found in Doryteuthis pealeii (Longfin inshore squid).